A 176-amino-acid polypeptide reads, in one-letter code: uncharacterized protein (176 aa).

Residues 1–12 (MRLPYSSSKPIP) show a composition bias toward polar residues. 2 disordered regions span residues 1-88 (MRLP…PQQQ) and 109-132 (VNNSPIKTPSKKHRSSSKKSPSSS). Over residues 13–24 (TNNNNNNNNTNN) the composition is skewed to low complexity. A compositionally biased stretch (polar residues) spans 37 to 46 (SYYQTQENNK). Residues 47 to 88 (PQQSQQHPLLQHQQQQQQQQQQQQQQQQQQQQQQQQQQPQQQ) are compositionally biased toward low complexity.

This is an uncharacterized protein from Dictyostelium discoideum (Social amoeba).